A 406-amino-acid chain; its full sequence is Phosphopentomutase (406 aa).

Positions 10, 305, 310, 346, 347, and 358 each coordinate Mn(2+).

It belongs to the phosphopentomutase family. The cofactor is Mn(2+).

Its subcellular location is the cytoplasm. It catalyses the reaction 2-deoxy-alpha-D-ribose 1-phosphate = 2-deoxy-D-ribose 5-phosphate. The catalysed reaction is alpha-D-ribose 1-phosphate = D-ribose 5-phosphate. It functions in the pathway carbohydrate degradation; 2-deoxy-D-ribose 1-phosphate degradation; D-glyceraldehyde 3-phosphate and acetaldehyde from 2-deoxy-alpha-D-ribose 1-phosphate: step 1/2. Isomerase that catalyzes the conversion of deoxy-ribose 1-phosphate (dRib-1-P) and ribose 1-phosphate (Rib-1-P) to deoxy-ribose 5-phosphate (dRib-5-P) and ribose 5-phosphate (Rib-5-P), respectively. This is Phosphopentomutase from Sinorhizobium fredii (strain NBRC 101917 / NGR234).